The primary structure comprises 435 residues: Eukaryotic translation initiation factor 3 subunit E (435 aa).

Residues phenylalanine 219–leucine 392 form the PCI domain.

It belongs to the eIF-3 subunit E family. In terms of assembly, component of the eukaryotic translation initiation factor 3 (eIF-3) complex.

The protein localises to the cytoplasm. Its function is as follows. Component of the eukaryotic translation initiation factor 3 (eIF-3) complex, which is involved in protein synthesis of a specialized repertoire of mRNAs and, together with other initiation factors, stimulates binding of mRNA and methionyl-tRNAi to the 40S ribosome. The eIF-3 complex specifically targets and initiates translation of a subset of mRNAs involved in cell proliferation. The protein is Eukaryotic translation initiation factor 3 subunit E (eIF3-S6) of Culex quinquefasciatus (Southern house mosquito).